The chain runs to 469 residues: GDNF family receptor alpha-1 (469 aa).

The N-terminal stretch at 1-27 is a signal peptide; sequence MFLALLYLALPLADVLLSAEVSGLPGG. 3 repeat units span residues 28–116, 149–237, and 238–341. Cysteine 39 and cysteine 45 are oxidised to a cystine. N-linked (GlcNAc...) asparagine glycans are attached at residues asparagine 62 and asparagine 163. 10 disulfide bridges follow: cysteine 153/cysteine 213, cysteine 160/cysteine 166, cysteine 177/cysteine 191, cysteine 186/cysteine 232, cysteine 215/cysteine 220, cysteine 242/cysteine 312, cysteine 249/cysteine 255, cysteine 266/cysteine 284, cysteine 276/cysteine 336, and cysteine 314/cysteine 324. N-linked (GlcNAc...) asparagine glycans are attached at residues asparagine 346 and asparagine 405. Residue serine 430 is the site of GPI-anchor amidated serine attachment. Residues 431–469 constitute a propeptide, removed in mature form; the sequence is HISSENSFALPTSFYPSTPLILMTIALSLFLFLSSSVVL.

Belongs to the GDNFR family. Interacts with GDNF ligand and RET: forms a 2:2:2 ternary complex composed of GDNF ligand, GFRA1 and RET receptor.

It is found in the cell membrane. It localises to the golgi apparatus. The protein localises to the trans-Golgi network. Its subcellular location is the endosome. The protein resides in the multivesicular body. Its function is as follows. Coreceptor for GDNF, a neurotrophic factor that enhances survival and morphological differentiation of dopaminergic neurons and increases their high-affinity dopamine uptake. GDNF-binding leads to autophosphorylation and activation of the RET receptor. The protein is GDNF family receptor alpha-1 (GFRA1) of Gallus gallus (Chicken).